An 827-amino-acid polypeptide reads, in one-letter code: Stage II sporulation protein E (827 aa).

10 helical membrane passes run 49–69 (IGFL…ALPF), 71–91 (GAML…VLAG), 116–136 (VAAF…FFSM), 142–162 (GFVY…AIVE), 175–195 (QSLP…EEII), 206–226 (TGLA…ARYV), 247–267 (GLIL…LAFS), 269–289 (LLGG…LIVG), 299–319 (GSAG…LFLL), and 320–340 (TPQS…EHLQ). Residues 341-827 (EQQQYARKIR…AIFQNKQEIS (487 aa)) are Cytoplasmic-facing. Residues 594–804 (STGAAHAAKG…DDMTVVVVRI (211 aa)) enclose the PPM-type phosphatase domain.

Mn(2+) serves as cofactor.

The protein localises to the cell membrane. It carries out the reaction O-phospho-L-seryl-[protein] + H2O = L-seryl-[protein] + phosphate. The catalysed reaction is O-phospho-L-threonyl-[protein] + H2O = L-threonyl-[protein] + phosphate. Functionally, normally needed for pro-sigma E processing during sporulation but can be bypassed in vegetative cells. Activates SpoIIAA by dephosphorylation. The protein is Stage II sporulation protein E (spoIIE) of Bacillus subtilis (strain 168).